The chain runs to 574 residues: DNA-directed primase/polymerase protein (574 aa).

Residues 2–22 (KRKWEERVKKVEELASYYERN) are a coiled coil. Residues Arg-76, 116–118 (DLE), 167–171 (KFSRH), 291–294 (RNFR), and Lys-300 each bind substrate. 2 residues coordinate Mn(2+): Asp-116 and Glu-118. Residues Cys-424, His-431, Cys-451, and Cys-456 each contribute to the Zn(2+) site. The short motif at 424-457 (CENIGRAHRSNNIMILVDLKKEVWYQKCHDPVCR) is the Zinc knuckle motif element.

It belongs to the eukaryotic-type primase small subunit family. Mn(2+) is required as a cofactor.

Its subcellular location is the nucleus. It localises to the mitochondrion matrix. The protein resides in the chromosome. The catalysed reaction is ssDNA + n NTP = ssDNA/pppN(pN)n-1 hybrid + (n-1) diphosphate.. The enzyme catalyses DNA(n) + a 2'-deoxyribonucleoside 5'-triphosphate = DNA(n+1) + diphosphate. Its function is as follows. DNA primase and DNA polymerase required to tolerate replication-stalling lesions by bypassing them. Required to facilitate mitochondrial and nuclear replication fork progression by initiating de novo DNA synthesis using dNTPs and acting as an error-prone DNA polymerase able to bypass certain DNA lesions. Shows a high capacity to tolerate DNA damage lesions such as 8oxoG and abasic sites in DNA. Provides different translesion synthesis alternatives when DNA replication is stalled: able to synthesize DNA primers downstream of lesions, such as UV lesions, R-loops and G-quadruplexes, to allow DNA replication to continue. Can also realign primers ahead of 'unreadable lesions' such as abasic sites and 6-4 photoproduct (6-4 pyrimidine-pyrimidinone), thereby skipping the lesion. Repriming avoids fork degradation while leading to accumulation of internal ssDNA gaps behind the forks. Also able to incorporate nucleotides opposite DNA lesions such as 8oxoG, like a regular translesion synthesis DNA polymerase. Also required for reinitiating stalled forks after ultraviolet (UV) damage during nuclear DNA replication. Required for mitochondrial DNA (mtDNA) synthesis and replication, by reinitiating synthesis after UV damage or in the presence of chain-terminating nucleotides. In addition to its role in DNA damage response, also required to maintain efficient nuclear and mitochondrial DNA replication in unperturbed cells. The protein is DNA-directed primase/polymerase protein of Gallus gallus (Chicken).